A 2159-amino-acid chain; its full sequence is ATP-binding cassette sub-family A member 7 (2159 aa).

A helical transmembrane segment spans residues 22–42 (PIQLLVELLWPLFLFFILVAV). At 43 to 546 (RHSHPPLEHH…DVFLRVLSRS (504 aa)) the chain is on the extracellular side. An intrachain disulfide couples C75 to C222. A glycan (N-linked (GlcNAc...) asparagine) is linked at N309. 6 helical membrane-spanning segments follow: residues 547-567 (LPLF…KAVV), 590-610 (LGWF…LVLV), 623-643 (VVIF…SFLL), 652-672 (LAAA…VLCV), 678-698 (LHLG…GFGC), and 732-752 (AFLL…EAVC). Residues 804–1035 (VSIRGLKKHF…LGCGYYLTLV (232 aa)) enclose the ABC transporter 1 domain. 838–845 (GHNGAGKT) contacts ATP. The helical transmembrane segment at 846–866 (TTLSILSGLFPPSSGSASILG) threads the bilayer. 2 disordered regions span residues 1042–1088 (VTHD…GAVP) and 1172–1192 (GGDS…PTGP). The segment covering 1044-1061 (HDAKGDSEDPRREKKSDG) has biased composition (basic and acidic residues). The segment covering 1062-1081 (NGRTSDTAFTRGTSDKSNQA) has biased composition (polar residues). A helical transmembrane segment spans residues 1246–1266 (VVLPALFVGLALFFSLIVPPF). The Extracellular portion of the chain corresponds to 1267 to 1551 (GQYPPLQLSP…TLIASSVDVL (285 aa)). A disulfide bridge links C1359 with C1373. Helical transmembrane passes span 1552–1572 (VSIC…LVLI), 1598–1618 (FLWD…IFLA), 1635–1655 (LLLL…SFFF), 1663–1683 (VVLT…TFVL), and 1743–1763 (IIGK…LITL). The region spanning 1807–2039 (LVLRDLTKVY…FGAGHTLTLR (233 aa)) is the ABC transporter 2 domain. 1841–1848 (GVNGAGKT) contacts ATP. The interval 2118-2159 (QGEEEESSRQEAEEEEVSKPGRQHPKRVSRFLEDPSSVETMI) is disordered. Acidic residues predominate over residues 2119-2133 (GEEEESSRQEAEEEE).

It belongs to the ABC transporter superfamily. ABCA family. N-glycosylated. Widely expressed with higher expression in brain, lung, adrenal gland, spleen and hematopoietic tissues (at protein level). In the brain, expressed in cortex, cerebellum, hippocampus, olfactory bulb, neurons, astrocytes and microglia (at protein level). Also expressed in adipocytes and macrophages (at protein level). Expressed in thymocytes (at protein level). Highly expressed in spleen and hematopoietic tissues. Expressed in brain, lung, macrophages, microglia, oligodendrocytes and neurons.

It localises to the cell membrane. Its subcellular location is the golgi apparatus membrane. The protein localises to the early endosome membrane. It is found in the cytoplasm. The protein resides in the cell projection. It localises to the ruffle membrane. Its subcellular location is the phagocytic cup. Probable ATP-binding cassette (ABC) transporter that plays a role in lipid homeostasis and macrophage-mediated phagocytosis. Binds APOA1 and may function in apolipoprotein-mediated phospholipid efflux from cells. May also mediate cholesterol efflux. May regulate cellular ceramide homeostasis during keratinocyte differentiation. Involved in lipid raft organization and CD1D localization on thymocytes and antigen-presenting cells, which plays an important role in natural killer T-cell development and activation. Plays a role in phagocytosis of apoptotic cells by macrophages. Macrophage phagocytosis is stimulated by APOA1 or APOA2, probably by stabilization of ABCA7. Also involved in phagocytic clearance of amyloid-beta by microglia cells and macrophages. Further limits amyloid-beta production by playing a role in the regulation of amyloid-beta A4 precursor protein (APP) endocytosis and/or processing. The polypeptide is ATP-binding cassette sub-family A member 7 (Abca7) (Mus musculus (Mouse)).